Reading from the N-terminus, the 219-residue chain is Leukocyte surface antigen CD53 (219 aa).

The Cytoplasmic segment spans residues 1-11 (MGMSSLKLLKY). The chain crosses the membrane as a helical span at residues 12–32 (VLFIFNLLFWVCGCCILGFGI). The Extracellular portion of the chain corresponds to 33–54 (YFLVQNTYGVLFRNLPFLTLGN). The helical transmembrane segment at 55-69 (ILVIVGSIIMVVAFL) threads the bilayer. Residues 70-80 (GCMGSIKENKC) lie on the Cytoplasmic side of the membrane. A helical transmembrane segment spans residues 81–106 (LLMSFFVLLLIILLAEVTIAILLFVY). Residues 107 to 181 (EQKLNTLVAE…NKAKSWFHSN (75 aa)) lie on the Extracellular side of the membrane. Residues asparagine 119, asparagine 129, and asparagine 148 are each glycosylated (N-linked (GlcNAc...) asparagine). A helical membrane pass occupies residues 182–206 (FLYIGIITICVCVIQVLGMSFALTL). The Cytoplasmic portion of the chain corresponds to 207 to 219 (NCQIDKTSQALGL).

This sequence belongs to the tetraspanin (TM4SF) family. Interacts with SCIMP. Interacts with CD45/PTPRC. Interacts with IL7R. Interacts with RBL2 and PPP2CA.

The protein localises to the cell membrane. The protein resides in the cell junction. It is found in the membrane. In terms of biological role, structural component of specialized membrane microdomains known as tetraspanin-enriched microdomains (TERMs), which act as platforms for receptor clustering and signaling. Participates thereby in diverse biological functions such as cell signal transduction, adhesion, migration and protein trafficking. Plays a role in the activation of monocytes and B-cells. Acts as an essential regulator of B-cell development by promoting interleukin-7 receptor/IL7R signaling. Also promotes, in B-cells, the BCR signaling by recruiting PKC to the plasma membrane in order to phosphorylate its substrates. Plays an essential role in lymphocyte homing to lymph nodes by stabilizing L-selectin/SELL cell surface expression. Also mediates metabolic and inflammatory functions in hepatocytes and adipose tissue by promoting TNF-alpha and LPS signaling independent of the immune compartment. Protects hematopoietic stem cell function in response to stress by facilitating DREAM complex activity through association with p130/RBL2 and its phosphatase PP2A. The protein is Leukocyte surface antigen CD53 (Cd53) of Mus musculus (Mouse).